Reading from the N-terminus, the 56-residue chain is Large ribosomal subunit protein bL32 (56 aa).

Positions 1-20 are enriched in basic residues; the sequence is MAVPKRRTSRSNTRSRRAQW. The tract at residues 1 to 26 is disordered; that stretch reads MAVPKRRTSRSNTRSRRAQWKAKAPA.

The protein belongs to the bacterial ribosomal protein bL32 family.

This chain is Large ribosomal subunit protein bL32, found in Parafrankia sp. (strain EAN1pec).